Consider the following 223-residue polypeptide: Ribose-5-phosphate isomerase A (223 aa).

Substrate contacts are provided by residues Thr-28 to Thr-31, Asp-81 to Asp-84, and Lys-94 to Gly-97. The Proton acceptor role is filled by Glu-103. Lys-121 provides a ligand contact to substrate.

Belongs to the ribose 5-phosphate isomerase family. Homodimer.

The catalysed reaction is aldehydo-D-ribose 5-phosphate = D-ribulose 5-phosphate. It functions in the pathway carbohydrate degradation; pentose phosphate pathway; D-ribose 5-phosphate from D-ribulose 5-phosphate (non-oxidative stage): step 1/1. Catalyzes the reversible conversion of ribose-5-phosphate to ribulose 5-phosphate. The protein is Ribose-5-phosphate isomerase A of Buchnera aphidicola subsp. Acyrthosiphon pisum (strain 5A).